A 557-amino-acid chain; its full sequence is MKKMSNIYESAANTLGIFNSPCLTKVELRVACKGISDRDALSKPDPCVILKMQSHGQWFEVDRTEVIRTCINPVYSKLFTVDFYFEEVQRLRFEVHDISSNHNGLKEADFLGGMECTLGQIVSQRKLSKSLLKHGNTAGKSSITVIAEELSGNDDYVELAFNARKLDDKDFFSKSDPFLEIFRMNDDATQQLVHRTEVVMNNLSPAWKSFKVSVNSLCSGDPDRRLKCIVWDWDSNGKHDFIGEFTSTFKEMRGAMEGKQVQWECINPKYKAKKKNYKNSGMVILNQCKIHKMHSFLDYIMGGCQIQFTVAIDFTASNGDPRNSCSLHYIHPYQPNEYLKALVAVGEICQDYDSDKMFPAFGFGARIPPEYTVSHDFAINFNEDNPECAGIQGVVEAYQSCLPKLQLYGPTNIAPIIQKVAKSASEETNTKEASQYFILLILTDGVITDMADTREAIVHASHLPMSVIIVGVGNADFSDMQMLDGDDGILRSPKGEPVLRDIVQFVPFRNFKHASPAALAKSVLAEVPNQVVDYYNGKGIKPKCSSEVYESSRTLAP.

C2 domains follow at residues 3–131 and 137–264; these read KMSN…SKSL and TAGK…VQWE. Aspartate 170, aspartate 176, aspartate 232, aspartate 234, and aspartate 240 together coordinate Ca(2+). Positions 305-507 constitute a VWFA domain; the sequence is QIQFTVAIDF…VLRDIVQFVP (203 aa).

This sequence belongs to the copine family. Interacts (via VWFA domain) with ACTB, BCOR, BICD2, CCDC22, CDC42BPB, CEP162, MYCBP2, NONO, PDCD6, PITPNM2, RDX, SKIL, SKT, SPTBN1, UBE2O and WTAP. The cofactor is Ca(2+).

Its function is as follows. Probable calcium-dependent phospholipid-binding protein that may play a role in calcium-mediated intracellular processes. The polypeptide is Copine-4 (Mus musculus (Mouse)).